The chain runs to 340 residues: 4-hydroxythreonine-4-phosphate dehydrogenase (340 aa).

Thr-135 provides a ligand contact to substrate. His-170, His-215, and His-276 together coordinate a divalent metal cation. The substrate site is built by Lys-284, Asn-293, and Arg-302.

Belongs to the PdxA family. Homodimer. The cofactor is a divalent metal cation.

The protein localises to the cytoplasm. The enzyme catalyses 4-(phosphooxy)-L-threonine + NAD(+) = 3-amino-2-oxopropyl phosphate + CO2 + NADH. The protein operates within cofactor biosynthesis; pyridoxine 5'-phosphate biosynthesis; pyridoxine 5'-phosphate from D-erythrose 4-phosphate: step 4/5. In terms of biological role, catalyzes the NAD(P)-dependent oxidation of 4-(phosphooxy)-L-threonine (HTP) into 2-amino-3-oxo-4-(phosphooxy)butyric acid which spontaneously decarboxylates to form 3-amino-2-oxopropyl phosphate (AHAP). This chain is 4-hydroxythreonine-4-phosphate dehydrogenase, found in Synechococcus sp. (strain JA-2-3B'a(2-13)) (Cyanobacteria bacterium Yellowstone B-Prime).